Consider the following 256-residue polypeptide: Receptor expression-enhancing protein 3 (256 aa).

3 helical membrane-spanning segments follow: residues 1 to 21, 42 to 62, and 68 to 88; these read MVSW…YPAY, WIVF…IAWF, and IKIA…SVIY. The interval 177–256 is disordered; the sequence is IMDQPDGAEY…NATTYSNMES (80 aa). The span at 247–256 shows a compositional bias: polar residues; sequence NATTYSNMES.

It belongs to the DP1 family.

Its subcellular location is the endoplasmic reticulum membrane. Functionally, microtubule-binding protein required to ensure proper cell division and nuclear envelope reassembly by sequestering the endoplasmic reticulum away from chromosomes during mitosis. Probably acts by clearing the endoplasmic reticulum membrane from metaphase chromosomes. This chain is Receptor expression-enhancing protein 3 (reep3), found in Danio rerio (Zebrafish).